A 734-amino-acid chain; its full sequence is Serine protease FAM111B (734 aa).

M1 carries the N-acetylmethionine modification. Basic and acidic residues-rich tracts occupy residues 1-10 (MNSMKTEENK) and 17-32 (DDQR…TVMK). The disordered stretch occupies residues 1–32 (MNSMKTEENKSFSAMEDDQRTRPEVSKDTVMK). K284 is covalently cross-linked (Glycyl lysine isopeptide (Lys-Gly) (interchain with G-Cter in SUMO2)). Residues 285-321 (QNESATDEINHQSLIQSKKKVHKPKKDGETKDVEHSR) form a disordered region. Basic and acidic residues predominate over residues 310-321 (KDGETKDVEHSR). Catalysis depends on charge relay system residues H490, D544, and S650. The tract at residues 712–734 (TYDEEKGKQESSLQDHQIEPMEC) is disordered.

Belongs to the FAM111 family. As to expression, widely expressed.

Functionally, serine protease. This chain is Serine protease FAM111B, found in Homo sapiens (Human).